A 616-amino-acid polypeptide reads, in one-letter code: GPI mannosyltransferase 3 (616 aa).

The Cytoplasmic segment spans residues 1–16; sequence MAHEVHRIKPKLGRTQ. Residues 17-37 form a helical membrane-spanning segment; that stretch reads IFWVFLAFRVLNAVLTRTFFQ. The Lumenal segment spans residues 38–86; it reads ADEFWQALEPAHWKAFKYGELTWEWKFGVRSYLFPMIFELTYRLVSLSS. A helical membrane pass occupies residues 87–107; the sequence is ILLHYALLLLSTIGSDLLILL. Residues 108–136 lie on the Cytoplasmic side of the membrane; it reads LPKYELSWQVAEDLKRLPFDVTRSFEYYG. Residues 137–157 traverse the membrane as a helical segment; the sequence is VIYAPKIVMAVLASIGEYYIV. The Lumenal portion of the chain corresponds to 158–188; that stretch reads RFVQKLYLLTLDKRNEKEEEERRSGLSEITK. The chain crosses the membrane as a helical span at residues 189-209; that stretch reads FALLLSLTNFFNCFFITRTFI. The Cytoplasmic segment spans residues 210–240; sequence NSFEMILTSIALYYWDWTGGQMIKESSFTKS. The helical transmembrane segment at 241–261 threads the bilayer; it reads LIFAFLACLQRPSSGLIWVIP. Residues 262–278 are Lumenal-facing; sequence SISLILNLVGKKQYHLL. A helical membrane pass occupies residues 279–299; sequence FITFSKVLRSFFLVFTANAII. Residues 300–338 lie on the Cytoplasmic side of the membrane; that stretch reads DMYFYEKVTFPFFRFLKFNFTTPLSKFYGVAPWHFHFFQ. The helical transmembrane segment at 339–359 threads the bilayer; that stretch reads SLPIVLGASIPAFAFGLFFPL. Topologically, residues 360 to 392 are lumenal; that stretch reads SKRSFPKKYLNPFFQVKLTILLNLLVYSTLPHK. A helical transmembrane segment spans residues 393 to 413; that stretch reads EFRFIFPLQPLFILISSFGLL. Residues 414–423 are Cytoplasmic-facing; that stretch reads RLDRDYWKRL. A helical membrane pass occupies residues 424–444; that stretch reads SGLKSLLWLVPFVSVFIALLL. At 445–616 the chain is on the lumenal side; it reads DTFHESGSIE…DYSDIPAADI (172 aa).

It belongs to the glycosyltransferase 22 family. PIGB subfamily.

It localises to the endoplasmic reticulum membrane. The protein operates within glycolipid biosynthesis; glycosylphosphatidylinositol-anchor biosynthesis. Mannosyltransferase involved in glycosylphosphatidylinositol-anchor biosynthesis. Transfers the third mannose to Man2-GlcN-acyl-PI during GPI precursor assembly. The chain is GPI mannosyltransferase 3 (GPI10) from Saccharomyces cerevisiae (strain ATCC 204508 / S288c) (Baker's yeast).